Reading from the N-terminus, the 614-residue chain is Threonine--tRNA ligase (614 aa).

The interval 1 to 138 (MRILTIHARK…PLSELSKTIR (138 aa)) is editing domain. Catalytic regions lie at residues 195–492 (NRVN…PYIP) and 196–492 (RVND…PYIP). Zn(2+) contacts are provided by cysteine 289, histidine 340, and histidine 461.

Belongs to the class-II aminoacyl-tRNA synthetase family. Homodimer. It depends on Zn(2+) as a cofactor.

The protein localises to the cytoplasm. The enzyme catalyses tRNA(Thr) + L-threonine + ATP = L-threonyl-tRNA(Thr) + AMP + diphosphate + H(+). Catalyzes the attachment of threonine to tRNA(Thr) in a two-step reaction: L-threonine is first activated by ATP to form Thr-AMP and then transferred to the acceptor end of tRNA(Thr). Also edits incorrectly charged L-seryl-tRNA(Thr). This chain is Threonine--tRNA ligase, found in Staphylothermus marinus (strain ATCC 43588 / DSM 3639 / JCM 9404 / F1).